The sequence spans 347 residues: Putative coenzyme F420-dependent oxidoreductase Rv3520c (347 aa).

The sequence is that of Putative coenzyme F420-dependent oxidoreductase Rv3520c from Mycobacterium tuberculosis (strain ATCC 25618 / H37Rv).